A 446-amino-acid chain; its full sequence is AP-2 complex subunit mu (446 aa).

Phosphoserine is present on residues serine 145, serine 151, and serine 152. At threonine 157 the chain carries Phosphothreonine. An MHD domain is found at 177–445 (KNSIYIDIVE…STRAGTCEIR (269 aa)).

Belongs to the adaptor complexes medium subunit family. Adaptor protein complex 2 (AP-2) is a heterotetramer composed of two large adaptins (alpha-type subunit apl3 and beta-type subunit apl1), a medium chain (mu-type subunit apm4) and a small adaptin (sigma-type subunit aps2).

The protein localises to the cell membrane. Its subcellular location is the membrane. It is found in the coated pit. Component of the adaptor complexes which link clathrin to receptors in coated vesicles. Clathrin-associated protein complexes are believed to interact with the cytoplasmic tails of membrane proteins, leading to their selection and concentration. AP50 is a subunit of the plasma membrane adaptor (Potential). The chain is AP-2 complex subunit mu (apm4) from Schizosaccharomyces pombe (strain 972 / ATCC 24843) (Fission yeast).